Here is an 892-residue protein sequence, read N- to C-terminus: Alanine--tRNA ligase (892 aa).

Zn(2+) is bound by residues His565, His569, Cys675, and His679. Residues 852-871 form a disordered region; the sequence is MGGKGGGGRPDMAQAGGPEA.

It belongs to the class-II aminoacyl-tRNA synthetase family. It depends on Zn(2+) as a cofactor.

It is found in the cytoplasm. It catalyses the reaction tRNA(Ala) + L-alanine + ATP = L-alanyl-tRNA(Ala) + AMP + diphosphate. Functionally, catalyzes the attachment of alanine to tRNA(Ala) in a two-step reaction: alanine is first activated by ATP to form Ala-AMP and then transferred to the acceptor end of tRNA(Ala). Also edits incorrectly charged Ser-tRNA(Ala) and Gly-tRNA(Ala) via its editing domain. The chain is Alanine--tRNA ligase from Parvibaculum lavamentivorans (strain DS-1 / DSM 13023 / NCIMB 13966).